We begin with the raw amino-acid sequence, 489 residues long: Cobyric acid synthase (489 aa).

The region spanning 247–439 (ALKVVVPVLP…IHGVFDEPAA (193 aa)) is the GATase cobBQ-type domain. The Nucleophile role is filled by cysteine 328. Residue histidine 431 is part of the active site.

The protein belongs to the CobB/CobQ family. CobQ subfamily.

It functions in the pathway cofactor biosynthesis; adenosylcobalamin biosynthesis. Functionally, catalyzes amidations at positions B, D, E, and G on adenosylcobyrinic A,C-diamide. NH(2) groups are provided by glutamine, and one molecule of ATP is hydrogenolyzed for each amidation. The sequence is that of Cobyric acid synthase from Marinobacter nauticus (strain ATCC 700491 / DSM 11845 / VT8) (Marinobacter aquaeolei).